Consider the following 549-residue polypeptide: Thermosome subunit alpha (549 aa).

The disordered stretch occupies residues 529–549 (EGRQGAECPPNGCMGGMDMRM).

It belongs to the TCP-1 chaperonin family. As to quaternary structure, forms a Heterooligomeric complex of two stacked eight-membered rings.

Its function is as follows. Molecular chaperone; binds unfolded polypeptides in vitro, and has a weak ATPase activity. The chain is Thermosome subunit alpha (thsA) from Thermococcus sp. (strain KS-8).